A 125-amino-acid chain; its full sequence is Mitochondrial import inner membrane translocase subunit tim16-A (125 aa).

The segment at 58–110 (EAQQILNVSKLTPEEIQKNYEHLFKVNDKGLGGSFYLQSKVVRAKERLDQEME) is J-like.

Belongs to the TIM16/PAM16 family. As to quaternary structure, probable component of the PAM complex at least composed of 1 mitochondrial HSP70 protein, 1 GRPE, 1 TIMM44, 1 TIMM16/PAM16 and 1 TIMM14. Associates with the TIM23 complex.

The protein localises to the mitochondrion inner membrane. Functionally, regulates ATP-dependent protein translocation into the mitochondrial matrix. The polypeptide is Mitochondrial import inner membrane translocase subunit tim16-A (pam16-a) (Xenopus laevis (African clawed frog)).